The sequence spans 761 residues: Signal transducer and transcription activator (761 aa).

The SH2 domain occupies Trp-594–Val-658. Tyr-711 is subject to Phosphotyrosine; by JAK.

It belongs to the transcription factor STAT family. As to quaternary structure, forms a homodimer or a heterodimer with a related family member. In terms of processing, tyrosine phosphorylated by hopscotch. Phosphorylation is required for DNA-binding activity and dimerization.

It is found in the cytoplasm. The protein resides in the nucleus. Functionally, might play a role in signal transduction and activation of transcription. Plays an important role in the segmental pattern formation in the early embryo by activating specific stripes of pair rule gene expression in early development as part of the Janus kinase-STAT pathway. Might play a role in male germline stem cell maintenance. The chain is Signal transducer and transcription activator (Stat92E) from Drosophila melanogaster (Fruit fly).